The following is a 272-amino-acid chain: Carbonic anhydrase (272 aa).

3 residues coordinate Zn(2+): Cys39, His98, and Cys101.

Belongs to the beta-class carbonic anhydrase family. As to quaternary structure, a hexamer formed by a trimer of dimers. Purified from carboxysomes with the both RuBisCO subunits and the full-length form of CcmM, probably interacts with the N-terminus of CcmM. Zn(2+) is required as a cofactor.

The protein resides in the carboxysome. The catalysed reaction is hydrogencarbonate + H(+) = CO2 + H2O. Reversible hydration of carbon dioxide. Essential to photosynthetic carbon dioxide fixation, supplies CO(2) to RuBisCO (ribulose bisphosphate carboxylase, rbcL-rbcS) in the carboxysome. Loss of activity results in limitation of CO(2) availability to RuBisCO located in the cytoplasm. This Synechococcus elongatus (strain ATCC 33912 / PCC 7942 / FACHB-805) (Anacystis nidulans R2) protein is Carbonic anhydrase.